The following is a 126-amino-acid chain: Protein ApaG (126 aa).

The region spanning 2 to 126 (DVIQPCIKIQ…FRLAIPNVLN (125 aa)) is the ApaG domain.

This is Protein ApaG from Vibrio campbellii (strain ATCC BAA-1116).